The sequence spans 354 residues: Uroporphyrinogen decarboxylase (354 aa).

Substrate is bound by residues R27–R31, D77, Y154, T209, and H327.

The protein belongs to the uroporphyrinogen decarboxylase family. As to quaternary structure, homodimer.

The protein localises to the cytoplasm. The catalysed reaction is uroporphyrinogen III + 4 H(+) = coproporphyrinogen III + 4 CO2. The protein operates within porphyrin-containing compound metabolism; protoporphyrin-IX biosynthesis; coproporphyrinogen-III from 5-aminolevulinate: step 4/4. Catalyzes the decarboxylation of four acetate groups of uroporphyrinogen-III to yield coproporphyrinogen-III. This Hydrogenovibrio crunogenus (strain DSM 25203 / XCL-2) (Thiomicrospira crunogena) protein is Uroporphyrinogen decarboxylase.